Here is a 337-residue protein sequence, read N- to C-terminus: DNA-directed RNA polymerase subunit alpha (337 aa).

The tract at residues 1–233 (MIQKNWQELI…DQLSIFVNFE (233 aa)) is alpha N-terminal domain (alpha-NTD). The segment at 249 to 337 (FNPALLKKVD…DLAKRYEDQY (89 aa)) is alpha C-terminal domain (alpha-CTD).

The protein belongs to the RNA polymerase alpha chain family. As to quaternary structure, homodimer. The RNAP catalytic core consists of 2 alpha, 1 beta, 1 beta' and 1 omega subunit. When a sigma factor is associated with the core the holoenzyme is formed, which can initiate transcription.

It catalyses the reaction RNA(n) + a ribonucleoside 5'-triphosphate = RNA(n+1) + diphosphate. In terms of biological role, DNA-dependent RNA polymerase catalyzes the transcription of DNA into RNA using the four ribonucleoside triphosphates as substrates. This chain is DNA-directed RNA polymerase subunit alpha, found in Brucella suis (strain ATCC 23445 / NCTC 10510).